A 915-amino-acid polypeptide reads, in one-letter code: Coiled-coil domain-containing protein 57 (915 aa).

The tract at residues 1–502 is centrosomal targeting domain; sequence MLPLGSEPAL…MHGLPRPGAQ (502 aa). Coiled-coil stretches lie at residues 92–173, 214–422, 456–483, and 521–548; these read VSEL…QRQE, LEAL…LERD, KSQV…VTLE, and IQRL…LSHQ. Disordered stretches follow at residues 555-574, 606-653, and 724-915; these read TAAE…GDAA, PLKM…QAGP, and QHGG…NIMD. Residues 606–915 form a microtubule binding domain region; it reads PLKMSSPHAE…PKIRNYNIMD (310 aa). Residues 613–627 show a composition bias toward polar residues; it reads HAESQPSVRTSTETT. Low complexity predominate over residues 628-652; that stretch reads GGSAQAGQAGGSVQAGQAGGSVQAG. Over residues 745–758 the composition is skewed to basic and acidic residues; it reads GREDAKSAEDEAPS. 3 stretches are compositionally biased toward polar residues: residues 781-794, 819-830, and 841-852; these read PKTQ…TCKS, SHSSSSFASGTL, and SSPSGVTSQGDS. The span at 879–891 shows a compositional bias: low complexity; that stretch reads KTAAQAKAKTTGA.

In terms of assembly, interacts with CEP63; the interaction is required for their location to proximal end of centrioles. Interacts with microtubules.

It localises to the cytoplasm. Its subcellular location is the cytoskeleton. The protein localises to the microtubule organizing center. It is found in the centrosome. The protein resides in the centriolar satellite. It localises to the centriole. Its subcellular location is the spindle. Functionally, pleiotropic regulator of centriole duplication, mitosis, and ciliogenesis. Critical interface between centrosome and microtubule-mediated cellular processes. Centriole duplication protein required for recruitment of CEP63, CEP152, and PLK4 to the centrosome. Independent of its centrosomal targeting, localizes to and interacts with microtubules and regulates microtubule nucleation, stability, and mitotic progression. The polypeptide is Coiled-coil domain-containing protein 57 (Homo sapiens (Human)).